Here is a 359-residue protein sequence, read N- to C-terminus: S-adenosylmethionine:tRNA ribosyltransferase-isomerase (359 aa).

Belongs to the QueA family. In terms of assembly, monomer.

It is found in the cytoplasm. It carries out the reaction 7-aminomethyl-7-carbaguanosine(34) in tRNA + S-adenosyl-L-methionine = epoxyqueuosine(34) in tRNA + adenine + L-methionine + 2 H(+). It participates in tRNA modification; tRNA-queuosine biosynthesis. Its function is as follows. Transfers and isomerizes the ribose moiety from AdoMet to the 7-aminomethyl group of 7-deazaguanine (preQ1-tRNA) to give epoxyqueuosine (oQ-tRNA). This is S-adenosylmethionine:tRNA ribosyltransferase-isomerase from Synechococcus sp. (strain ATCC 27144 / PCC 6301 / SAUG 1402/1) (Anacystis nidulans).